We begin with the raw amino-acid sequence, 305 residues long: Acetyl-coenzyme A carboxylase carboxyl transferase subunit beta (305 aa).

One can recognise a CoA carboxyltransferase N-terminal domain in the interval 23-292 (GWLKCTHCNE…EENEPSPPPK (270 aa)). Residues C27, C30, C46, and C49 each coordinate Zn(2+). A C4-type zinc finger spans residues 27–49 (CTHCNELIHANELEQNSNCCPKC). A disordered region spans residues 281 to 305 (FSEENEPSPPPKNLIKKTSPLKDKN).

This sequence belongs to the AccD/PCCB family. As to quaternary structure, acetyl-CoA carboxylase is a heterohexamer composed of biotin carboxyl carrier protein (AccB), biotin carboxylase (AccC) and two subunits each of ACCase subunit alpha (AccA) and ACCase subunit beta (AccD). Zn(2+) serves as cofactor.

The protein localises to the cytoplasm. It carries out the reaction N(6)-carboxybiotinyl-L-lysyl-[protein] + acetyl-CoA = N(6)-biotinyl-L-lysyl-[protein] + malonyl-CoA. The protein operates within lipid metabolism; malonyl-CoA biosynthesis; malonyl-CoA from acetyl-CoA: step 1/1. In terms of biological role, component of the acetyl coenzyme A carboxylase (ACC) complex. Biotin carboxylase (BC) catalyzes the carboxylation of biotin on its carrier protein (BCCP) and then the CO(2) group is transferred by the transcarboxylase to acetyl-CoA to form malonyl-CoA. The chain is Acetyl-coenzyme A carboxylase carboxyl transferase subunit beta from Protochlamydia amoebophila (strain UWE25).